Consider the following 173-residue polypeptide: CKLF-like MARVEL transmembrane domain-containing protein 8 (173 aa).

An MARVEL domain is found at 36–168 (FLRTLPGFLI…NTYFSFIAWR (133 aa)). 4 helical membrane-spanning segments follow: residues 40 to 60 (LPGFLIVAEIVLGLLVWTLIA), 70 to 90 (FGWVMFVAVFYWVLTVFFLII), 105 to 125 (TTVGLCFNGSAFVLYLSAAVV), and 147 to 167 (FFAFLVTICYAGNTYFSFIAW).

The protein belongs to the chemokine-like factor family. Highly expressed in liver and pancreas.

Its subcellular location is the membrane. The protein resides in the cytoplasm. The protein localises to the nucleus. This is CKLF-like MARVEL transmembrane domain-containing protein 8 (CMTM8) from Homo sapiens (Human).